The sequence spans 478 residues: Centromere DNA-binding protein complex CBF3 subunit C (478 aa).

The tract at residues 206–251 (EVGEEKDVDVSGANSDENSSPSSTIKNKKRSASKRSHSDNGNVGAT) is disordered. The span at 217 to 230 (GANSDENSSPSSTI) shows a compositional bias: polar residues. Basic residues predominate over residues 231-240 (KNKKRSASKR).

As to quaternary structure, component of the CBF3 copmplex, which is formed of CBF3A/CBF2, CBF3B/CEP3, CBF3C/CTF13 and CBF3D. CBF3C interacts with CBF3D and SGT1.

It localises to the nucleus. The protein localises to the chromosome. It is found in the centromere. Functionally, acts as a central component of the centromere DNA-binding protein complex CBF3, which is essential for chromosome segregation and movement of centromeres along microtubules. CBF3 is required for the recruitment of other kinetochore complexes to CEN DNA. It plays a role in the attachment of chromosomes to the spindle and binds selectively to a highly conserved DNA sequence called CDEIII, found in centromers and in several promoters. The association of CBF3C with CBF3D and SGT1 is required for CBF3C activation and CBF3 assembly. This is Centromere DNA-binding protein complex CBF3 subunit C (CTF13) from Saccharomyces cerevisiae (strain ATCC 204508 / S288c) (Baker's yeast).